A 469-amino-acid chain; its full sequence is Ribosomal protein uS12 methylthiotransferase RimO (469 aa).

The 115-residue stretch at 1 to 115 folds into the MTTase N-terminal domain; it reads MKFHIITLGC…IGSVVAGGVA (115 aa). 6 residues coordinate [4Fe-4S] cluster: Cys10, Cys46, Cys78, Cys180, Cys184, and Cys187. Residues 166–398 form the Radical SAM core domain; that stretch reads NKRGPSAYLK…MAVQQVISRA (233 aa). In terms of domain architecture, TRAM spans 401-469; sequence ARFVGQTMKV…TDYDLWGEIV (69 aa).

The protein belongs to the methylthiotransferase family. RimO subfamily. It depends on [4Fe-4S] cluster as a cofactor.

It localises to the cytoplasm. The enzyme catalyses L-aspartate(89)-[ribosomal protein uS12]-hydrogen + (sulfur carrier)-SH + AH2 + 2 S-adenosyl-L-methionine = 3-methylsulfanyl-L-aspartate(89)-[ribosomal protein uS12]-hydrogen + (sulfur carrier)-H + 5'-deoxyadenosine + L-methionine + A + S-adenosyl-L-homocysteine + 2 H(+). Functionally, catalyzes the methylthiolation of an aspartic acid residue of ribosomal protein uS12. This is Ribosomal protein uS12 methylthiotransferase RimO from Herpetosiphon aurantiacus (strain ATCC 23779 / DSM 785 / 114-95).